The chain runs to 169 residues: Aspartic protease inhibitor 6 (169 aa).

The N-linked (GlcNAc...) asparagine glycan is linked to N1. Intrachain disulfides connect C30–C75 and C124–C134.

This sequence belongs to the protease inhibitor I3 (leguminous Kunitz-type inhibitor) family.

The protein localises to the vacuole. Its function is as follows. Inhibitor of cathepsin D (aspartic protease). May also inhibit trypsin and chymotrypsin (serine proteases). Protects the plant by inhibiting proteases of invading organisms. This Solanum tuberosum (Potato) protein is Aspartic protease inhibitor 6.